The chain runs to 300 residues: Ribonuclease Z (300 aa).

Zn(2+) is bound by residues His63, His65, Asp67, His68, His140, Asp207, and His265. Asp67 acts as the Proton acceptor in catalysis.

It belongs to the RNase Z family. As to quaternary structure, homodimer. It depends on Zn(2+) as a cofactor.

It carries out the reaction Endonucleolytic cleavage of RNA, removing extra 3' nucleotides from tRNA precursor, generating 3' termini of tRNAs. A 3'-hydroxy group is left at the tRNA terminus and a 5'-phosphoryl group is left at the trailer molecule.. Zinc phosphodiesterase, which displays some tRNA 3'-processing endonuclease activity. Probably involved in tRNA maturation, by removing a 3'-trailer from precursor tRNA. The polypeptide is Ribonuclease Z (Ignicoccus hospitalis (strain KIN4/I / DSM 18386 / JCM 14125)).